The following is a 273-amino-acid chain: Putative pyruvate, phosphate dikinase regulatory protein (273 aa).

Residue 151-158 (GVSRTSKT) coordinates ADP.

The protein belongs to the pyruvate, phosphate/water dikinase regulatory protein family. PDRP subfamily.

The catalysed reaction is N(tele)-phospho-L-histidyl/L-threonyl-[pyruvate, phosphate dikinase] + ADP = N(tele)-phospho-L-histidyl/O-phospho-L-threonyl-[pyruvate, phosphate dikinase] + AMP + H(+). The enzyme catalyses N(tele)-phospho-L-histidyl/O-phospho-L-threonyl-[pyruvate, phosphate dikinase] + phosphate + H(+) = N(tele)-phospho-L-histidyl/L-threonyl-[pyruvate, phosphate dikinase] + diphosphate. Functionally, bifunctional serine/threonine kinase and phosphorylase involved in the regulation of the pyruvate, phosphate dikinase (PPDK) by catalyzing its phosphorylation/dephosphorylation. This chain is Putative pyruvate, phosphate dikinase regulatory protein, found in Desulfitobacterium hafniense (strain DSM 10664 / DCB-2).